Reading from the N-terminus, the 461-residue chain is D-phenylhydantoinase (461 aa).

3 residues coordinate a divalent metal cation: histidine 59, histidine 61, and lysine 151. Lysine 151 carries the N6-carboxylysine modification. Substrate is bound at residue tyrosine 156. The a divalent metal cation site is built by histidine 182 and histidine 239. A substrate-binding site is contributed by serine 286. A divalent metal cation is bound at residue aspartate 313. Residue asparagine 335 coordinates substrate.

Belongs to the metallo-dependent hydrolases superfamily. Hydantoinase/dihydropyrimidinase family. In terms of assembly, homotetramer. A divalent metal cation serves as cofactor. Carboxylation allows a single lysine to coordinate two divalent metal cations.

It catalyses the reaction D-5-phenylhydantoin + H2O = N-carbamoyl-D-phenylglycine + H(+). Catalyzes the stereospecific hydrolysis of the cyclic amide bond of D-hydantoin derivatives with an aromatic side chains at the 5'-position. Has no activity on dihydropyrimidines. The physiological function is unknown. The protein is D-phenylhydantoinase of Escherichia coli O127:H6 (strain E2348/69 / EPEC).